The following is a 190-amino-acid chain: Recombination protein RecR (190 aa).

The C4-type zinc-finger motif lies at 58 to 73; it reads CTQCGGLSEDELCYIC. The Toprim domain maps to 81–167; the sequence is SSLCLVESAR…HFTKIAQGVP (87 aa).

It belongs to the RecR family.

In terms of biological role, may play a role in DNA repair. It seems to be involved in an RecBC-independent recombinational process of DNA repair. It may act with RecF and RecO. This is Recombination protein RecR from Nitratiruptor sp. (strain SB155-2).